The primary structure comprises 560 residues: 2-succinyl-5-enolpyruvyl-6-hydroxy-3-cyclohexene-1-carboxylate synthase (560 aa).

This sequence belongs to the TPP enzyme family. MenD subfamily. Homodimer. It depends on Mg(2+) as a cofactor. Mn(2+) serves as cofactor. Thiamine diphosphate is required as a cofactor.

It catalyses the reaction isochorismate + 2-oxoglutarate + H(+) = 5-enolpyruvoyl-6-hydroxy-2-succinyl-cyclohex-3-ene-1-carboxylate + CO2. It participates in quinol/quinone metabolism; 1,4-dihydroxy-2-naphthoate biosynthesis; 1,4-dihydroxy-2-naphthoate from chorismate: step 2/7. Its pathway is quinol/quinone metabolism; menaquinone biosynthesis. Catalyzes the thiamine diphosphate-dependent decarboxylation of 2-oxoglutarate and the subsequent addition of the resulting succinic semialdehyde-thiamine pyrophosphate anion to isochorismate to yield 2-succinyl-5-enolpyruvyl-6-hydroxy-3-cyclohexene-1-carboxylate (SEPHCHC). The polypeptide is 2-succinyl-5-enolpyruvyl-6-hydroxy-3-cyclohexene-1-carboxylate synthase (Lactococcus lactis subsp. lactis (strain IL1403) (Streptococcus lactis)).